Here is a 266-residue protein sequence, read N- to C-terminus: Translation initiation factor 2 subunit alpha (266 aa).

The S1 motif domain occupies 12 to 83 (GEILIATVKQ…RKGTVDVSLK (72 aa)).

This sequence belongs to the eIF-2-alpha family. Heterotrimer composed of an alpha, a beta and a gamma chain.

Functionally, eIF-2 functions in the early steps of protein synthesis by forming a ternary complex with GTP and initiator tRNA. The sequence is that of Translation initiation factor 2 subunit alpha from Saccharolobus islandicus (strain Y.N.15.51 / Yellowstone #2) (Sulfolobus islandicus).